The following is a 254-amino-acid chain: Phosphoribosylaminoimidazole-succinocarboxamide synthase (254 aa).

The protein belongs to the SAICAR synthetase family.

The catalysed reaction is 5-amino-1-(5-phospho-D-ribosyl)imidazole-4-carboxylate + L-aspartate + ATP = (2S)-2-[5-amino-1-(5-phospho-beta-D-ribosyl)imidazole-4-carboxamido]succinate + ADP + phosphate + 2 H(+). Its pathway is purine metabolism; IMP biosynthesis via de novo pathway; 5-amino-1-(5-phospho-D-ribosyl)imidazole-4-carboxamide from 5-amino-1-(5-phospho-D-ribosyl)imidazole-4-carboxylate: step 1/2. This chain is Phosphoribosylaminoimidazole-succinocarboxamide synthase, found in Gluconacetobacter diazotrophicus (strain ATCC 49037 / DSM 5601 / CCUG 37298 / CIP 103539 / LMG 7603 / PAl5).